A 144-amino-acid polypeptide reads, in one-letter code: MLFFNVASLKYKHHESIQMIIDRIDHLVLTVSDISTTIRFYEEVLGFSAVTFKQNRKALIFGAQKINLHQQEMEFEPKASRPTPGSADLCFITSTPINDVVSEILQAGISIVEGPVERTGATGEIMSIYIRDPDGNLIEISQYV.

The region spanning 23 to 143 (RIDHLVLTVS…DGNLIEISQY (121 aa)) is the VOC domain.

Is critically involved in promoting the replication of S.typhimurium cells inside host macrophages, suggesting a role in the establishment of bacterial colonization within macrophages. May be involved in the biosynthesis and modification of the peptidoglycan layer of the cell wall. The polypeptide is Virulence protein STM3117 (Salmonella typhimurium (strain LT2 / SGSC1412 / ATCC 700720)).